A 132-amino-acid chain; its full sequence is Small ribosomal subunit protein uS8 (132 aa).

It belongs to the universal ribosomal protein uS8 family. As to quaternary structure, part of the 30S ribosomal subunit. Contacts proteins S5 and S12.

One of the primary rRNA binding proteins, it binds directly to 16S rRNA central domain where it helps coordinate assembly of the platform of the 30S subunit. The chain is Small ribosomal subunit protein uS8 from Francisella tularensis subsp. novicida (strain U112).